The chain runs to 152 residues: UPF0266 membrane protein YobD (152 aa).

Topologically, residues 1–5 (MTITD) are periplasmic. The helical transmembrane segment at 6–26 (LVLILFIAALLAYALYDQFIM) threads the bilayer. The Cytoplasmic segment spans residues 27–44 (PRRNGPTLLSIALLRRGR). A helical membrane pass occupies residues 45–65 (IDSVIFVGLVAILIYNNVTSH). Residue glycine 66 is a topological domain, periplasmic. Residues 67–87 (AQMTTWLLSALALMGFYIFWI) form a helical membrane-spanning segment. The Cytoplasmic segment spans residues 88–152 (RTPRIIFKQR…KIYKLLIENQ (65 aa)).

It belongs to the UPF0266 family.

It localises to the cell inner membrane. In Salmonella typhi, this protein is UPF0266 membrane protein YobD (yobD).